Here is a 503-residue protein sequence, read N- to C-terminus: Glutamate/gamma-aminobutyrate antiporter (503 aa).

33–43 (LHLVFFLLLGG) contacts L-glutamate. Helical transmembrane passes span 35–55 (LVFFLLLGGLLWFLPVALCAA), 153–173 (FVVGIVIPSIILFGLAAAYFI), 194–214 (VSTLVVFVSFILAYMGVEASA), 232–252 (ILLVILAISLDAIGGFSVAAV), 366–386 (LTVVIYLVGYLLFFIGYFVLI), 407–427 (IIAGIGFLLSIFALFISFVPP), and 440–460 (MILLISFVVTAILPFIVYELH).

The protein belongs to the amino acid-polyamine-organocation (APC) superfamily. Glutamate:GABA antiporter (GGA) (TC 2.A.3.7) family.

It is found in the cell membrane. The enzyme catalyses 4-aminobutanoate(in) + L-glutamate(out) = 4-aminobutanoate(out) + L-glutamate(in). Functionally, involved in glutaminase-dependent acid resistance. Exchanges extracellular glutamate (Glu) for intracellular gamma-aminobutyric acid (GABA) under acidic conditions. The protein is Glutamate/gamma-aminobutyrate antiporter (gadC) of Lactococcus lactis subsp. lactis (strain IL1403) (Streptococcus lactis).